Consider the following 89-residue polypeptide: Small ribosomal subunit protein bS20 (89 aa).

Positions 1 to 26 (MANSAQARKRARQADGQRSHNASLRS) are disordered.

Belongs to the bacterial ribosomal protein bS20 family.

Functionally, binds directly to 16S ribosomal RNA. In Dechloromonas aromatica (strain RCB), this protein is Small ribosomal subunit protein bS20.